The chain runs to 148 residues: Azurin (148 aa).

The N-terminal stretch at 1-20 (MLRKLAAVSLLSLLSAPLLA) is a signal peptide. The Plastocyanin-like domain occupies 21–148 (AECSVDIQGN…ALMKGTLTLK (128 aa)). Cysteine 23 and cysteine 46 form a disulfide bridge. Positions 66, 132, 137, and 141 each coordinate Cu cation.

The protein resides in the periplasm. Transfers electrons from cytochrome c551 to cytochrome oxidase. In Pseudomonas aeruginosa (strain ATCC 15692 / DSM 22644 / CIP 104116 / JCM 14847 / LMG 12228 / 1C / PRS 101 / PAO1), this protein is Azurin (azu).